A 200-amino-acid polypeptide reads, in one-letter code: NADH-quinone oxidoreductase subunit C (200 aa).

It belongs to the complex I 30 kDa subunit family. NDH-1 is composed of 14 different subunits. Subunits NuoB, C, D, E, F, and G constitute the peripheral sector of the complex.

The protein localises to the cell inner membrane. The enzyme catalyses a quinone + NADH + 5 H(+)(in) = a quinol + NAD(+) + 4 H(+)(out). Its function is as follows. NDH-1 shuttles electrons from NADH, via FMN and iron-sulfur (Fe-S) centers, to quinones in the respiratory chain. The immediate electron acceptor for the enzyme in this species is believed to be ubiquinone. Couples the redox reaction to proton translocation (for every two electrons transferred, four hydrogen ions are translocated across the cytoplasmic membrane), and thus conserves the redox energy in a proton gradient. This is NADH-quinone oxidoreductase subunit C from Paraburkholderia phytofirmans (strain DSM 17436 / LMG 22146 / PsJN) (Burkholderia phytofirmans).